A 285-amino-acid chain; its full sequence is Elongation factor Ts (285 aa).

Residues 82 to 85 (TDFV) are involved in Mg(2+) ion dislocation from EF-Tu.

The protein belongs to the EF-Ts family.

The protein resides in the cytoplasm. In terms of biological role, associates with the EF-Tu.GDP complex and induces the exchange of GDP to GTP. It remains bound to the aminoacyl-tRNA.EF-Tu.GTP complex up to the GTP hydrolysis stage on the ribosome. This is Elongation factor Ts from Yersinia pseudotuberculosis serotype O:1b (strain IP 31758).